The primary structure comprises 494 residues: Bifunctional protein HldE (494 aa).

The segment at 1–334 (MPTPILDFDA…RKILPHAYLA (334 aa)) is ribokinase. ATP is bound at residue 209–212 (NRKE). D279 is an active-site residue. A cytidylyltransferase region spans residues 362–494 (FTNGCFDILH…LVHRARGGAK (133 aa)).

This sequence in the N-terminal section; belongs to the carbohydrate kinase PfkB family. In the C-terminal section; belongs to the cytidylyltransferase family. Homodimer.

It carries out the reaction D-glycero-beta-D-manno-heptose 7-phosphate + ATP = D-glycero-beta-D-manno-heptose 1,7-bisphosphate + ADP + H(+). It catalyses the reaction D-glycero-beta-D-manno-heptose 1-phosphate + ATP + H(+) = ADP-D-glycero-beta-D-manno-heptose + diphosphate. The protein operates within nucleotide-sugar biosynthesis; ADP-L-glycero-beta-D-manno-heptose biosynthesis; ADP-L-glycero-beta-D-manno-heptose from D-glycero-beta-D-manno-heptose 7-phosphate: step 1/4. It functions in the pathway nucleotide-sugar biosynthesis; ADP-L-glycero-beta-D-manno-heptose biosynthesis; ADP-L-glycero-beta-D-manno-heptose from D-glycero-beta-D-manno-heptose 7-phosphate: step 3/4. Catalyzes the phosphorylation of D-glycero-D-manno-heptose 7-phosphate at the C-1 position to selectively form D-glycero-beta-D-manno-heptose-1,7-bisphosphate. Its function is as follows. Catalyzes the ADP transfer from ATP to D-glycero-beta-D-manno-heptose 1-phosphate, yielding ADP-D-glycero-beta-D-manno-heptose. The polypeptide is Bifunctional protein HldE (Bradyrhizobium diazoefficiens (strain JCM 10833 / BCRC 13528 / IAM 13628 / NBRC 14792 / USDA 110)).